We begin with the raw amino-acid sequence, 157 residues long: Transcription elongation factor GreA (157 aa).

It belongs to the GreA/GreB family.

Functionally, necessary for efficient RNA polymerase transcription elongation past template-encoded arresting sites. The arresting sites in DNA have the property of trapping a certain fraction of elongating RNA polymerases that pass through, resulting in locked ternary complexes. Cleavage of the nascent transcript by cleavage factors such as GreA or GreB allows the resumption of elongation from the new 3'terminus. GreA releases sequences of 2 to 3 nucleotides. The sequence is that of Transcription elongation factor GreA from Hyphomonas neptunium (strain ATCC 15444).